A 269-amino-acid chain; its full sequence is Expansin-B9 (269 aa).

The first 24 residues, 1–24 (MGSLTTNIVLAVAVVAALVGGGSC), serve as a signal peptide directing secretion. An N-linked (GlcNAc...) asparagine glycan is attached at Asn-34. The Expansin-like EG45 domain maps to 63–169 (GGACGIKNVN…RRVRCKYPGG (107 aa)). 3 disulfide bridges follow: Cys-66–Cys-94, Cys-97–Cys-164, and Cys-102–Cys-108. An Expansin-like CBD domain is found at 183–264 (NYLAVLVKFV…NWMPDAIYVS (82 aa)).

Belongs to the expansin family. Expansin B subfamily.

Its subcellular location is the secreted. It is found in the cell wall. The protein localises to the membrane. May cause loosening and extension of plant cell walls by disrupting non-covalent bonding between cellulose microfibrils and matrix glucans. No enzymatic activity has been found. May be required for rapid internodal elongation in deepwater rice during submergence. This is Expansin-B9 (EXPB9) from Oryza sativa subsp. japonica (Rice).